We begin with the raw amino-acid sequence, 422 residues long: MSFVECPYHSPAERLVAEADEGGPSAITGMGLCFRCLLFSFSGRSGVEGGRVDLNVFGSLGLQPWIGSSRCWGGPCSSALRCGWFSSWPPPSKSAIPIGGGSRGAGRVSRWPPPHWLEAWRVSPLPLSPLSPATFGRGFIAVAVIPGLWARGRGCSSDRLPRPAGPARRQFQAASLLTRGWGRAWPWKQILKELDECYERFSRETDGAQKRRMLHCVQRALIRSQELGDEKIQIVSQMVELVENRTRQVDSHVELFEAQQELGDTAGNSGKAGADRPKGEAAAQADKPNSKRSRRQRNNENRENASSNHDHDDGASGTPKEKKAKTSKKKKRSKAKAEREASPADLPIDPNEPTYCLCNQVSYGEMIGCDNDECPIEWFHFSCVGLNHKPKGKWYCPKCRGENEKTMDKALEKSKKERAYNR.

The tract at residues 261–349 (ELGDTAGNSG…EASPADLPID (89 aa)) is disordered. A Glycyl lysine isopeptide (Lys-Gly) (interchain with G-Cter in SUMO2) cross-link involves residue lysine 278. Basic and acidic residues predominate over residues 297 to 314 (RNNENRENASSNHDHDDG). Basic residues predominate over residues 322-334 (KKAKTSKKKKRSK). The segment at 353–402 (PTYCLCNQVSYGEMIGCDNDECPIEWFHFSCVGLNHKPKGKWYCPKCRGE) adopts a PHD-type zinc-finger fold. Residues cysteine 356, cysteine 358, cysteine 369, cysteine 374, histidine 380, cysteine 383, cysteine 396, and cysteine 399 each coordinate Zn(2+). Positions 405–422 (KTMDKALEKSKKERAYNR) are PBR.

The protein belongs to the ING family. Interacts with H3K4me3 and to a lesser extent with H3K4me2. Interacts with TP53. Isoform 2 interacts with RSL1D1. In terms of tissue distribution, isoform 2 was expressed in all normal tissues and cells examined, as well as in all breast cancer and melanoma cell lines examined. Isoform 3 was expressed in testis, liver, and kidney, weakly expressed in colon and brain and not expressed in breast and cultured melanocytes. Isoform 4 was highly expressed in testis and weakly expressed in brain, but not expressed in breast, colon, kidney, melanocytes, breast cancer or melanoma cell lines.

The protein resides in the nucleus. Functionally, cooperates with p53/TP53 in the negative regulatory pathway of cell growth by modulating p53-dependent transcriptional activation. Implicated as a tumor suppressor gene. The sequence is that of Inhibitor of growth protein 1 (ING1) from Homo sapiens (Human).